The following is a 488-amino-acid chain: MLSAARLNRLFLAGELSAVEIAESALSRIAQVEPAVGAFITVAADHVIERAKKLDARRKAGDTELGPLAGVPIAVKDNICTSGMETTCASRILKGYVSPFDATVVERLRAAGAMIIGKANMDEFAMGSSGESSAFGVTRNPWDLERVPGGSSSGSAAAVAAGEAPLALGTDTGGSIRQPAAFTGIVGLKPTYGYVSRYGVVAFASSLDQVGPMGRDVEDVARLFEVIAGPDRRDATNAGRTPPALKFGGEPSLSGVRLGVPKELLGPGIDPGVKARVEEAIAQLEELGATVEECSLPSTEYALSAYYVIAVAEASSNLARFDGVRYGYRAAQAGGLHEMYSKTRGEGFGTEVKRRIMLGTYVLSAGHYDAYYRRAQQVRTLVVRDFERAFERYDALVTPTTPFTAWKIGEKVDDPVSMYLGDICTIPVNLAGLPAVSVPCGFVDGLPVGMQLIGKPFADTQILQIAWAYQKVTKHHEARPALTEEGGR.

Residues lysine 76 and serine 151 each act as charge relay system in the active site. Catalysis depends on serine 175, which acts as the Acyl-ester intermediate.

It belongs to the amidase family. GatA subfamily. Heterotrimer of A, B and C subunits.

It catalyses the reaction L-glutamyl-tRNA(Gln) + L-glutamine + ATP + H2O = L-glutaminyl-tRNA(Gln) + L-glutamate + ADP + phosphate + H(+). Functionally, allows the formation of correctly charged Gln-tRNA(Gln) through the transamidation of misacylated Glu-tRNA(Gln) in organisms which lack glutaminyl-tRNA synthetase. The reaction takes place in the presence of glutamine and ATP through an activated gamma-phospho-Glu-tRNA(Gln). This is Glutamyl-tRNA(Gln) amidotransferase subunit A from Symbiobacterium thermophilum (strain DSM 24528 / JCM 14929 / IAM 14863 / T).